Here is a 241-residue protein sequence, read N- to C-terminus: Ribonuclease HII (241 aa).

The region spanning 57 to 241 (NFIAGVDEAG…RTYVEKILKG (185 aa)) is the RNase H type-2 domain. Residues Asp63, Glu64, and Asp155 each coordinate a divalent metal cation.

This sequence belongs to the RNase HII family. Mn(2+) is required as a cofactor. The cofactor is Mg(2+).

The protein resides in the cytoplasm. It carries out the reaction Endonucleolytic cleavage to 5'-phosphomonoester.. Its function is as follows. Endonuclease that specifically degrades the RNA of RNA-DNA hybrids. This Caldanaerobacter subterraneus subsp. tengcongensis (strain DSM 15242 / JCM 11007 / NBRC 100824 / MB4) (Thermoanaerobacter tengcongensis) protein is Ribonuclease HII.